Consider the following 463-residue polypeptide: L-seryl-tRNA(Sec) selenium transferase (463 aa).

Lysine 295 is modified (N6-(pyridoxal phosphate)lysine).

It belongs to the SelA family. As to quaternary structure, homodecamer; pentamer of dimers. Binds only one seryl-tRNA(Sec) per dimer. The cofactor is pyridoxal 5'-phosphate.

Its subcellular location is the cytoplasm. It catalyses the reaction L-seryl-tRNA(Sec) + selenophosphate + H(+) = L-selenocysteinyl-tRNA(Sec) + phosphate. It participates in aminoacyl-tRNA biosynthesis; selenocysteinyl-tRNA(Sec) biosynthesis; selenocysteinyl-tRNA(Sec) from L-seryl-tRNA(Sec) (bacterial route): step 1/1. Its function is as follows. Converts seryl-tRNA(Sec) to selenocysteinyl-tRNA(Sec) required for selenoprotein biosynthesis. The protein is L-seryl-tRNA(Sec) selenium transferase of Proteus mirabilis (strain HI4320).